Here is a 295-residue protein sequence, read N- to C-terminus: Trehalose/maltose transport system permease protein MalF (295 aa).

Helical transmembrane passes span L16 to V36, V79 to I99, A112 to M132, I146 to V166, I210 to A230, I236 to A256, and I267 to L287. An ABC transmembrane type-1 domain is found at T75–Y286.

Belongs to the binding-protein-dependent transport system permease family. As to quaternary structure, the complex is composed of two ATP-binding proteins (MalK), two transmembrane proteins (MalG and MalF) and a solute-binding protein (MalE).

It is found in the cell membrane. Part of the ABC transporter complex MalEFGK involved in trehalose/maltose import. Responsible for the translocation of the substrate across the membrane. The protein is Trehalose/maltose transport system permease protein MalF (malF) of Thermococcus litoralis (strain ATCC 51850 / DSM 5473 / JCM 8560 / NS-C).